A 347-amino-acid polypeptide reads, in one-letter code: Lipoyl synthase (347 aa).

7 residues coordinate [4Fe-4S] cluster: cysteine 77, cysteine 82, cysteine 88, cysteine 103, cysteine 107, cysteine 110, and serine 317. Positions 89–306 (FADGTATFMI…MDYGKKIGFF (218 aa)) constitute a Radical SAM core domain.

This sequence belongs to the radical SAM superfamily. Lipoyl synthase family. It depends on [4Fe-4S] cluster as a cofactor.

It localises to the cytoplasm. It catalyses the reaction [[Fe-S] cluster scaffold protein carrying a second [4Fe-4S](2+) cluster] + N(6)-octanoyl-L-lysyl-[protein] + 2 oxidized [2Fe-2S]-[ferredoxin] + 2 S-adenosyl-L-methionine + 4 H(+) = [[Fe-S] cluster scaffold protein] + N(6)-[(R)-dihydrolipoyl]-L-lysyl-[protein] + 4 Fe(3+) + 2 hydrogen sulfide + 2 5'-deoxyadenosine + 2 L-methionine + 2 reduced [2Fe-2S]-[ferredoxin]. It participates in protein modification; protein lipoylation via endogenous pathway; protein N(6)-(lipoyl)lysine from octanoyl-[acyl-carrier-protein]: step 2/2. In terms of biological role, catalyzes the radical-mediated insertion of two sulfur atoms into the C-6 and C-8 positions of the octanoyl moiety bound to the lipoyl domains of lipoate-dependent enzymes, thereby converting the octanoylated domains into lipoylated derivatives. This chain is Lipoyl synthase, found in Psychrobacter cryohalolentis (strain ATCC BAA-1226 / DSM 17306 / VKM B-2378 / K5).